Here is a 100-residue protein sequence, read N- to C-terminus: Urease subunit gamma (100 aa).

The protein belongs to the urease gamma subunit family. In terms of assembly, heterotrimer of UreA (gamma), UreB (beta) and UreC (alpha) subunits. Three heterotrimers associate to form the active enzyme.

The protein resides in the cytoplasm. The catalysed reaction is urea + 2 H2O + H(+) = hydrogencarbonate + 2 NH4(+). It participates in nitrogen metabolism; urea degradation; CO(2) and NH(3) from urea (urease route): step 1/1. This is Urease subunit gamma from Bacillus cereus (strain ATCC 10987 / NRS 248).